The primary structure comprises 77 residues: Tautomerase PptA (77 aa).

Residue proline 2 is the Proton acceptor; via imino nitrogen of the active site.

This sequence belongs to the 4-oxalocrotonate tautomerase family. PptA subfamily. As to quaternary structure, homodimer.

The protein localises to the cytoplasm. The sequence is that of Tautomerase PptA from Escherichia coli (strain K12 / MC4100 / BW2952).